Reading from the N-terminus, the 100-residue chain is ATP phosphoribosyltransferase (100 aa).

This sequence belongs to the ATP phosphoribosyltransferase family. Long subfamily. As to quaternary structure, equilibrium between an active dimeric form, an inactive hexameric form and higher aggregates. Interconversion between the various forms is largely reversible and is influenced by the natural substrates and inhibitors of the enzyme. Mg(2+) serves as cofactor.

It localises to the cytoplasm. The catalysed reaction is 1-(5-phospho-beta-D-ribosyl)-ATP + diphosphate = 5-phospho-alpha-D-ribose 1-diphosphate + ATP. It functions in the pathway amino-acid biosynthesis; L-histidine biosynthesis; L-histidine from 5-phospho-alpha-D-ribose 1-diphosphate: step 1/9. Feedback inhibited by histidine. Its function is as follows. Catalyzes the condensation of ATP and 5-phosphoribose 1-diphosphate to form N'-(5'-phosphoribosyl)-ATP (PR-ATP). Has a crucial role in the pathway because the rate of histidine biosynthesis seems to be controlled primarily by regulation of HisG enzymatic activity. This Klebsiella pneumoniae protein is ATP phosphoribosyltransferase (hisG).